Here is an 81-residue protein sequence, read N- to C-terminus: Protein I5 homolog (81 aa).

The next 2 membrane-spanning stretches (helical) occupy residues leucine 8–valine 28 and methionine 53–isoleucine 73.

This sequence belongs to the Chordopoxvirinae I5 family.

It localises to the virion membrane. The sequence is that of Protein I5 homolog from Vertebrata (FPV).